Here is a 344-residue protein sequence, read N- to C-terminus: L-threonine 3-dehydrogenase (344 aa).

Cys38 is a Zn(2+) binding site. Residues Thr40 and His43 each act as charge relay system in the active site. Positions 63, 64, 93, 96, 99, and 107 each coordinate Zn(2+). NAD(+)-binding positions include Ile175, Asp195, Arg200, 263-265, and 287-288; these read LGI and IY.

It belongs to the zinc-containing alcohol dehydrogenase family. Homotetramer. It depends on Zn(2+) as a cofactor.

The protein resides in the cytoplasm. It catalyses the reaction L-threonine + NAD(+) = (2S)-2-amino-3-oxobutanoate + NADH + H(+). The protein operates within amino-acid degradation; L-threonine degradation via oxydo-reductase pathway; glycine from L-threonine: step 1/2. In terms of biological role, catalyzes the NAD(+)-dependent oxidation of L-threonine to 2-amino-3-ketobutyrate. This chain is L-threonine 3-dehydrogenase, found in Deinococcus deserti (strain DSM 17065 / CIP 109153 / LMG 22923 / VCD115).